Here is a 182-residue protein sequence, read N- to C-terminus: Putative manganese efflux pump MntP (182 aa).

6 consecutive transmembrane segments (helical) span residues 6–26, 37–57, 72–92, 101–121, 131–151, and 162–182; these read LIPL…VSLG, ILYI…IGMV, FAGA…SILE, IGIS…SVGL, IITI…GLLL, and YGEI…LFPI.

It belongs to the MntP (TC 9.B.29) family.

The protein resides in the cell membrane. Its function is as follows. Probably functions as a manganese efflux pump. This is Putative manganese efflux pump MntP from Bacillus mycoides (strain KBAB4) (Bacillus weihenstephanensis).